The following is a 108-amino-acid chain: UPF0060 membrane protein YnfA (108 aa).

Over 1–5 the chain is Periplasmic; it reads MIKTT. A helical membrane pass occupies residues 6 to 26; it reads LLFFATALCEIIGCFLPWLWL. Residues 27–30 are Cytoplasmic-facing; it reads KRNA. The helical transmembrane segment at 31–51 threads the bilayer; the sequence is SIWLLLPAGISLALFVWLLTL. At 52–60 the chain is on the periplasmic side; the sequence is HPAASGRIY. A helical membrane pass occupies residues 61–81; it reads AAYGGVYVCTALMWLRVVDGV. Topologically, residues 82–84 are cytoplasmic; the sequence is KLT. A helical transmembrane segment spans residues 85 to 105; it reads LYDWTGALIALCGMLIIVAGW. Over 106 to 108 the chain is Periplasmic; it reads GRT.

Belongs to the UPF0060 family.

The protein resides in the cell inner membrane. This Shigella dysenteriae serotype 1 (strain Sd197) protein is UPF0060 membrane protein YnfA.